A 373-amino-acid chain; its full sequence is Protein-glutamate methylesterase/protein-glutamine glutaminase 1 (373 aa).

The region spanning 16–133 (RVVVVDDSAL…ASGLTELSDQ (118 aa)) is the Response regulatory domain. 4-aspartylphosphate is present on Asp67. Positions 175–367 (RVSTEKLICI…PALIAKLSSA (193 aa)) constitute a CheB-type methylesterase domain. Residues Ser187, His213, and Asp309 contribute to the active site.

Belongs to the CheB family. Post-translationally, phosphorylated by CheA. Phosphorylation of the N-terminal regulatory domain activates the methylesterase activity.

Its subcellular location is the cytoplasm. The enzyme catalyses [protein]-L-glutamate 5-O-methyl ester + H2O = L-glutamyl-[protein] + methanol + H(+). It carries out the reaction L-glutaminyl-[protein] + H2O = L-glutamyl-[protein] + NH4(+). Functionally, involved in chemotaxis. Part of a chemotaxis signal transduction system that modulates chemotaxis in response to various stimuli. Catalyzes the demethylation of specific methylglutamate residues introduced into the chemoreceptors (methyl-accepting chemotaxis proteins or MCP) by CheR. Also mediates the irreversible deamidation of specific glutamine residues to glutamic acid. This is Protein-glutamate methylesterase/protein-glutamine glutaminase 1 from Albidiferax ferrireducens (strain ATCC BAA-621 / DSM 15236 / T118) (Rhodoferax ferrireducens).